The chain runs to 120 residues: Large ribosomal subunit protein bL17 (120 aa).

It belongs to the bacterial ribosomal protein bL17 family. In terms of assembly, part of the 50S ribosomal subunit. Contacts protein L32.

In Mesomycoplasma hyopneumoniae (strain 232) (Mycoplasma hyopneumoniae), this protein is Large ribosomal subunit protein bL17.